A 526-amino-acid chain; its full sequence is Phosphoenolpyruvate carboxykinase (ATP) 2 (526 aa).

3 residues coordinate substrate: Arg55, Tyr190, and Lys196. ATP is bound by residues Lys196, His215, and 231-239 (GLSGTGKTT). Positions 196 and 215 each coordinate Mn(2+). Asp252 serves as a coordination point for Mn(2+). Glu280, Arg317, and Thr442 together coordinate ATP. A substrate-binding site is contributed by Arg317.

It belongs to the phosphoenolpyruvate carboxykinase (ATP) family. Mn(2+) is required as a cofactor.

The protein localises to the cytoplasm. The enzyme catalyses oxaloacetate + ATP = phosphoenolpyruvate + ADP + CO2. It participates in carbohydrate biosynthesis; gluconeogenesis. Its function is as follows. Involved in the gluconeogenesis. Catalyzes the conversion of oxaloacetate (OAA) to phosphoenolpyruvate (PEP) through direct phosphoryl transfer between the nucleoside triphosphate and OAA. This is Phosphoenolpyruvate carboxykinase (ATP) 2 from Moorella thermoacetica (strain ATCC 39073 / JCM 9320).